The chain runs to 194 residues: Ras-related protein RabU (194 aa).

GTP is bound at residue Gly-19 to Lys-27. The short motif at Pro-42–Phe-50 is the Effector region element. GTP-binding positions include Pro-68–Tyr-72 and Asn-130–Glu-133.

The protein belongs to the small GTPase superfamily. Rab family.

This Dictyostelium discoideum (Social amoeba) protein is Ras-related protein RabU (rabU).